We begin with the raw amino-acid sequence, 521 residues long: Probable cytochrome P450 12d1 distal, mitochondrial (521 aa).

The N-terminal 19 residues, 1–19 (MNTLSSARSVAIYVGPVRS), are a transit peptide targeting the mitochondrion. Cys467 is a binding site for heme.

The protein belongs to the cytochrome P450 family. It depends on heme as a cofactor.

Its subcellular location is the mitochondrion membrane. The polypeptide is Probable cytochrome P450 12d1 distal, mitochondrial (Drosophila melanogaster (Fruit fly)).